Here is a 347-residue protein sequence, read N- to C-terminus: MDNCILEIKNLSHYYDNNGNKTLDNINLKIKKNEFITLLGPSGCGKTTLIKILGGFLSQKNGEIYFLSKEISKTNPNKREINTVFQNYALFPHMNVFDNISFGLRMKKTPKDTIKEKVKTSLSLIGMPKYAYRNINELSGGQKQRVAIARAMVMEPKLLLLDEPLSALDLKMRQEMQKELKKIQRQLGITFIYVTHDQEEALTMSDRIVVMNEGIILQVGTPEEIYNEPKTKFVADFIGESNIFDGTYKKELVVSLLGHEFECLDKGFEAEEAVDLVIRPEDIKLLPKGKGHLSGTITSAIFQGVHYEMTLEIQKTNWIVQSTRLTKVGEEVDIFLEPDDIHVMHKE.

In terms of domain architecture, ABC transporter spans 6–238 (LEIKNLSHYY…PKTKFVADFI (233 aa)). An ATP-binding site is contributed by 40 to 47 (GPSGCGKT).

This sequence belongs to the ABC transporter superfamily. Spermidine/putrescine importer (TC 3.A.1.11.1) family. In terms of assembly, the complex is composed of two ATP-binding proteins (PotA), two transmembrane proteins (PotB and PotC) and a solute-binding protein (PotD).

It localises to the cell inner membrane. The catalysed reaction is ATP + H2O + polyamine-[polyamine-binding protein]Side 1 = ADP + phosphate + polyamineSide 2 + [polyamine-binding protein]Side 1.. In terms of biological role, part of the ABC transporter complex PotABCD involved in spermidine/putrescine import. Responsible for energy coupling to the transport system. The chain is Spermidine/putrescine import ATP-binding protein PotA from Borreliella afzelii (strain PKo) (Borrelia afzelii).